The primary structure comprises 374 residues: Type IV secretion system protein PtlG (374 aa).

A helical membrane pass occupies residues 38 to 56 (WMFALVAVALSCLLATGIW). Residues 86 to 117 (HPREPEPAPLPDMPAAPDPILPQPRPAPPVPP) are disordered. The segment covering 92 to 117 (PAPLPDMPAAPDPILPQPRPAPPVPP) has biased composition (pro residues).

The protein belongs to the TrbI/VirB10 family.

Its subcellular location is the cell membrane. In terms of biological role, component of the type IV secretion system ptl required for secretion of assembled pertussis toxin (PTX) through the outer membrane. This Bordetella pertussis (strain Tohama I / ATCC BAA-589 / NCTC 13251) protein is Type IV secretion system protein PtlG (ptlG).